The primary structure comprises 318 residues: MKHLLSMADLSADEITGLLDEAQNFKEALEGRELKKLPTLRGRTIFTVFYENSTRTRSSFETAGKWMSADVINISASSSSVKKGESLQDTGLTLTAIGADALIIRHPSSGAAQQLAHWVAPNGDGPSVINAGDGAHQHPTQALLDALTLRQRLGGINGRKIVIVGDILHSRVARSNAELLTKLGAEVVYVAPPTLLPYGVETWPVRISYDMDSELADADAIMMLRVQAERMAGGFFPSHREYATLYGMSTAREAKMKDKAIIMHPGPMLRGMEINYSVADAPRTAVLQQVNNGVHVRMAVLFSLIIGTHGQSHTTKES.

Carbamoyl phosphate contacts are provided by Arg55 and Thr56. Lys83 lines the L-aspartate pocket. Arg105, His138, and Gln141 together coordinate carbamoyl phosphate. Arg171 and Arg225 together coordinate L-aspartate. Carbamoyl phosphate contacts are provided by Gly266 and Pro267.

The protein belongs to the aspartate/ornithine carbamoyltransferase superfamily. ATCase family. Heterododecamer (2C3:3R2) of six catalytic PyrB chains organized as two trimers (C3), and six regulatory PyrI chains organized as three dimers (R2).

The enzyme catalyses carbamoyl phosphate + L-aspartate = N-carbamoyl-L-aspartate + phosphate + H(+). It functions in the pathway pyrimidine metabolism; UMP biosynthesis via de novo pathway; (S)-dihydroorotate from bicarbonate: step 2/3. In terms of biological role, catalyzes the condensation of carbamoyl phosphate and aspartate to form carbamoyl aspartate and inorganic phosphate, the committed step in the de novo pyrimidine nucleotide biosynthesis pathway. This is Aspartate carbamoyltransferase catalytic subunit from Corynebacterium kroppenstedtii (strain DSM 44385 / JCM 11950 / CIP 105744 / CCUG 35717).